The sequence spans 622 residues: Low affinity potassium transport system protein Kup (622 aa).

12 helical membrane passes run 9–29 (LPAV…TSPL), 52–72 (FLSL…LLFV), 99–119 (TPVL…EVVI), 137–157 (PSLQ…LFFI), 165–185 (VGKL…VLGV), 213–233 (VSFF…ALYA), 247–267 (WFSA…ALLL), 276–296 (PFFL…ATLA), 337–357 (IYIP…IVSF), 363–383 (LAAA…ILSC), 394–414 (LLIV…MFAA), and 419–439 (IFSG…AMIT).

It belongs to the HAK/KUP transporter (TC 2.A.72) family.

The protein localises to the cell inner membrane. It catalyses the reaction K(+)(in) + H(+)(in) = K(+)(out) + H(+)(out). In terms of biological role, responsible for the low-affinity transport of potassium into the cell. Likely operates as a K(+):H(+) symporter. The chain is Low affinity potassium transport system protein Kup from Sodalis glossinidius (strain morsitans).